We begin with the raw amino-acid sequence, 339 residues long: Serine/threonine-protein kinase SRK2J (339 aa).

One can recognise a Protein kinase domain in the interval 4 to 260; the sequence is YEMVKDLGFG…LKEIKSHAWF (257 aa). ATP contacts are provided by residues 10–18 and lysine 33; that span reads LGFGNFGLA. Residue aspartate 123 is the Proton acceptor of the active site. Residues 308–339 form a disordered region; it reads SRPVESLGSDKKDDDEEEYLDANDEEWYDDYA. The segment covering 320 to 339 has biased composition (acidic residues); sequence DDDEEEYLDANDEEWYDDYA.

This sequence belongs to the protein kinase superfamily. Ser/Thr protein kinase family. As to expression, expressed in seedlings.

It catalyses the reaction L-seryl-[protein] + ATP = O-phospho-L-seryl-[protein] + ADP + H(+). The catalysed reaction is L-threonyl-[protein] + ATP = O-phospho-L-threonyl-[protein] + ADP + H(+). This chain is Serine/threonine-protein kinase SRK2J (SRK2J), found in Arabidopsis thaliana (Mouse-ear cress).